Reading from the N-terminus, the 299-residue chain is MAQLIDGKKLAEDVVSTVKTETEKLVAATGIVPGIAVVIVGEDPASQVYVASKSKKAKECGFHSVQHDLPETASEQELLDLIESLNNDPAIHGILVQLPLPKHIDSGRVIQTISPDKDVDGFHFINVGKLGTGEVETAFVPCTPAGAMIMIERIHGRDLSGLNAVVIGRSNIVGKPMFNLLLAANATVTVAHSRTKDLPAIARTADILVAAVGRPQMVKGDWVKPGATVIDVGINRIPAPERGEGRTRLVGDVDFVEAEKVAGAITPVPGGVGPMTIAMLMANTLTAACRTAGVKKPVF.

NADP(+) contacts are provided by residues 168–170, Ser193, and Ile234; that span reads GRS.

The protein belongs to the tetrahydrofolate dehydrogenase/cyclohydrolase family. Homodimer.

It catalyses the reaction (6R)-5,10-methylene-5,6,7,8-tetrahydrofolate + NADP(+) = (6R)-5,10-methenyltetrahydrofolate + NADPH. It carries out the reaction (6R)-5,10-methenyltetrahydrofolate + H2O = (6R)-10-formyltetrahydrofolate + H(+). It participates in one-carbon metabolism; tetrahydrofolate interconversion. Its function is as follows. Catalyzes the oxidation of 5,10-methylenetetrahydrofolate to 5,10-methenyltetrahydrofolate and then the hydrolysis of 5,10-methenyltetrahydrofolate to 10-formyltetrahydrofolate. In Brucella anthropi (strain ATCC 49188 / DSM 6882 / CCUG 24695 / JCM 21032 / LMG 3331 / NBRC 15819 / NCTC 12168 / Alc 37) (Ochrobactrum anthropi), this protein is Bifunctional protein FolD.